Here is a 333-residue protein sequence, read N- to C-terminus: Pollen allergen KBG 41 (333 aa).

Residues 1-23 (MAVHQYTVALFLAVALVAGPAAS) form the signal peptide. A run of 2 repeats spans residues 309–320 (TGAATAAAGGYK) and 321–332 (TGAATPTAGGYK). Positions 309-332 (TGAATAAAGGYKTGAATPTAGGYK) are 2 X 12 AA tandem repeats.

This sequence belongs to the Poa p IX/Phl p VI allergen family. In terms of tissue distribution, pollen.

In Poa pratensis (Kentucky bluegrass), this protein is Pollen allergen KBG 41.